The following is a 621-amino-acid chain: 1,4-alpha-glucan branching enzyme GlgB (621 aa).

Residue aspartate 302 is the Nucleophile of the active site. Glutamate 355 (proton donor) is an active-site residue.

Belongs to the glycosyl hydrolase 13 family. GlgB subfamily. As to quaternary structure, monomer.

It catalyses the reaction Transfers a segment of a (1-&gt;4)-alpha-D-glucan chain to a primary hydroxy group in a similar glucan chain.. It participates in glycan biosynthesis; glycogen biosynthesis. Functionally, catalyzes the formation of the alpha-1,6-glucosidic linkages in glycogen by scission of a 1,4-alpha-linked oligosaccharide from growing alpha-1,4-glucan chains and the subsequent attachment of the oligosaccharide to the alpha-1,6 position. This chain is 1,4-alpha-glucan branching enzyme GlgB, found in Dechloromonas aromatica (strain RCB).